A 634-amino-acid chain; its full sequence is Sodium-dependent neutral amino acid transporter B(0)AT1 (634 aa).

The Cytoplasmic portion of the chain corresponds to 1–41 (MVRLVLPNPGLDTRILSLAELETIEQEEASSRPKWDNKAQY). Serine 17 bears the Phosphoserine mark. The chain crosses the membrane as a helical span at residues 42–62 (LLTCVGFCVGLGNVWRFPYLC). Over 63–65 (QSH) the chain is Extracellular. Residues 66-86 (GGGAFMIPFLILLVLEGIPLL) traverse the membrane as a helical segment. Residues 87 to 120 (HLEFAIGQRLRRGSLGVWSSIHPALKGVGLTSML) are Cytoplasmic-facing. The chain crosses the membrane as a helical span at residues 121–141 (VSFVVGLYYNTIISWIMWYLF). The Extracellular portion of the chain corresponds to 142–192 (NSFQEPLPWSECPLNENQTGYVDECARSSPVDYFWYRETLNISTSISDSGS). Asparagine 158 and asparagine 182 each carry an N-linked (GlcNAc...) asparagine glycan. The helical transmembrane segment at 193–213 (IQWRMLLCLACAWSVLYMCTI) threads the bilayer. Topologically, residues 214–221 (RGIETTGK) are cytoplasmic. A helical membrane pass occupies residues 222–242 (VVYITSTLPYVVLTIFLIRGL). The Extracellular portion of the chain corresponds to 243-268 (TLKGATKGIIYLFTPNVTELANPVTW). Asparagine 258 is a glycosylation site (N-linked (GlcNAc...) asparagine). Residues 269-289 (LDAGAQVFFSFSLAFGGLISF) form a helical membrane-spanning segment. Over 290-304 (SSYNSVHNNCERDSV) the chain is Cytoplasmic. The chain crosses the membrane as a helical span at residues 305–325 (IVSIINGFTSVYVAIVIYSII). Residues 326–413 (GFRATQRYDD…TEAITKMPVS (88 aa)) are Extracellular-facing. Asparagine 354 and asparagine 368 each carry an N-linked (GlcNAc...) asparagine glycan. The helical transmembrane segment at 414–434 (PLWSVLFFIMLFCLGLSSMFG) threads the bilayer. At 435–456 (NMEGVVVPLQDLKVIPPKWPKE) the chain is on the cytoplasmic side. The helical transmembrane segment at 457 to 477 (LLTGLICLGTFLIGFIFTLNS) threads the bilayer. Residues 478-487 (GQYWLSLLDS) lie on the Extracellular side of the membrane. A helical membrane pass occupies residues 488 to 508 (YAVSIPLLIIAFCEMFSVVYV). Topologically, residues 509–531 (YGVDRFNKDIEFMIGHKPNIFWQ) are cytoplasmic. Residues 532-552 (VTWRVVSPLLMLIILVFFFVV) form a helical membrane-spanning segment. At 553–581 (QVSQELTYSIWNPGYEEFPKSQKISHPNW) the chain is on the extracellular side. The helical transmembrane segment at 582–602 (VYAVVVIVAGVPSLTIPSYAI) threads the bilayer. The Cytoplasmic segment spans residues 603-634 (YKLIRNCCQKPGDRQGLVSTLSTASMNGDLKY). A Phosphoserine modification is found at serine 627.

It belongs to the sodium:neurotransmitter symporter (SNF) (TC 2.A.22) family. SLC6A19 subfamily. In terms of assembly, interacts in a tissue-specific manner with ACE2 in small intestine and with CLTRN in the kidney. Interacts with CLTRN; this interaction is required for trafficking of SLC6A19 to the plasma membrane and for its catalytic activation in kidneys. Interacts with ACE2; this interaction is required for trafficking of SLC6A19 to the plasma membrane and for its catalytic activation in intestine. Interacts with ANPEP; the interaction positively regulates its amino acid transporter activity.

It is found in the membrane. The enzyme catalyses L-alanine(in) + Na(+)(in) = L-alanine(out) + Na(+)(out). The catalysed reaction is L-cysteine(in) + Na(+)(in) = L-cysteine(out) + Na(+)(out). It carries out the reaction L-glutamine(in) + Na(+)(in) = L-glutamine(out) + Na(+)(out). It catalyses the reaction glycine(in) + Na(+)(in) = glycine(out) + Na(+)(out). The enzyme catalyses L-isoleucine(in) + Na(+)(in) = L-isoleucine(out) + Na(+)(out). The catalysed reaction is L-leucine(in) + Na(+)(in) = L-leucine(out) + Na(+)(out). It carries out the reaction L-methionine(in) + Na(+)(in) = L-methionine(out) + Na(+)(out). It catalyses the reaction L-phenylalanine(in) + Na(+)(in) = L-phenylalanine(out) + Na(+)(out). The enzyme catalyses L-serine(in) + Na(+)(in) = L-serine(out) + Na(+)(out). The catalysed reaction is L-tryptophan(in) + Na(+)(in) = L-tryptophan(out) + Na(+)(out). It carries out the reaction L-tyrosine(in) + Na(+)(in) = L-tyrosine(out) + Na(+)(out). It catalyses the reaction L-valine(in) + Na(+)(in) = L-valine(out) + Na(+)(out). Its function is as follows. Transporter that mediates resorption of neutral amino acids across the apical membrane of renal and intestinal epithelial cells. This uptake is sodium-dependent and chloride-independent. Requires CLTRN in kidney or ACE2 in intestine for cell surface expression and amino acid transporter activity. The polypeptide is Sodium-dependent neutral amino acid transporter B(0)AT1 (SLC6A19) (Pongo abelii (Sumatran orangutan)).